We begin with the raw amino-acid sequence, 449 residues long: NADP-specific glutamate dehydrogenase (449 aa).

The substrate site is built by K92, Q113, and K116. K128 functions as the Proton donor in the catalytic mechanism. G167 serves as a coordination point for substrate. Residues T211 and N242 each contribute to the NADP(+) site. S380 lines the substrate pocket.

The protein belongs to the Glu/Leu/Phe/Val dehydrogenases family. As to quaternary structure, homohexamer.

It carries out the reaction L-glutamate + NADP(+) + H2O = 2-oxoglutarate + NH4(+) + NADPH + H(+). Its function is as follows. Catalyzes the reversible oxidative deamination of glutamate to alpha-ketoglutarate and ammonia. The protein is NADP-specific glutamate dehydrogenase (gdhA) of Haemophilus influenzae (strain ATCC 51907 / DSM 11121 / KW20 / Rd).